Consider the following 439-residue polypeptide: MKELDLSDPLSMVLKIAELTTRHNVWRLRESINLIASENVMSLTALKAYLSDFMFRYAEGKPFKRYYQGTRYIDELEVLTGELMGSMMGTNLVELRPVSGTIANASVFRVLAEPGDKAVIAPVQAGAHVSHTKFGTLGALGIEQVSMPYDEENMNVDVDKAVKLIEEVKPRFAVLGGSVYIFPHPTREIAEAIHSVGGKLIYDAAHVLGLIMGGAWPNPLERGADAVTGSTHKTFPGPQGGAVFFRDEQLYKKVSKTIFPWWVSNHHLHRIPATAITAVEMKLYGRDYASQVTSNARKLAEALAAEGLKVIGEHLGYTRSHQVVVDVRDLGGGAKCASLLEESNIIVNKNLLPWDPPEAVKDPSGIRIGVQEVTRLGMKHGEMEEIAKLIRKVLIDKEDPKKVAEQVKEFRKQFMKIHYSLDDKDVRIDTIADILSLAQ.

127 to 129 (AHV) provides a ligand contact to (6S)-5,6,7,8-tetrahydrofolate. Position 233 is an N6-(pyridoxal phosphate)lysine (K233).

This sequence belongs to the SHMT family. In terms of assembly, homodimer. Pyridoxal 5'-phosphate is required as a cofactor.

It localises to the cytoplasm. It participates in amino-acid biosynthesis; glycine biosynthesis; glycine from L-serine: step 1/1. Its function is as follows. Catalyzes the reversible interconversion of serine and glycine with a modified folate serving as the one-carbon carrier. Also exhibits a pteridine-independent aldolase activity toward beta-hydroxyamino acids, producing glycine and aldehydes, via a retro-aldol mechanism. The protein is Serine hydroxymethyltransferase of Aeropyrum pernix (strain ATCC 700893 / DSM 11879 / JCM 9820 / NBRC 100138 / K1).